The primary structure comprises 103 residues: Large ribosomal subunit protein uL24 (103 aa).

This sequence belongs to the universal ribosomal protein uL24 family. Part of the 50S ribosomal subunit.

Functionally, one of two assembly initiator proteins, it binds directly to the 5'-end of the 23S rRNA, where it nucleates assembly of the 50S subunit. One of the proteins that surrounds the polypeptide exit tunnel on the outside of the subunit. The sequence is that of Large ribosomal subunit protein uL24 from Agathobacter rectalis (strain ATCC 33656 / DSM 3377 / JCM 17463 / KCTC 5835 / VPI 0990) (Eubacterium rectale).